A 396-amino-acid polypeptide reads, in one-letter code: 1-deoxy-D-xylulose 5-phosphate reductoisomerase (396 aa).

Positions 13, 14, 15, 16, and 127 each coordinate NADPH. 1-deoxy-D-xylulose 5-phosphate is bound at residue K128. E129 provides a ligand contact to NADPH. Mn(2+) is bound at residue D153. 4 residues coordinate 1-deoxy-D-xylulose 5-phosphate: S154, E155, S184, and H207. E155 lines the Mn(2+) pocket. An NADPH-binding site is contributed by G213. 1-deoxy-D-xylulose 5-phosphate contacts are provided by S220, N225, K226, and E229. A Mn(2+)-binding site is contributed by E229.

The protein belongs to the DXR family. The cofactor is Mg(2+). Mn(2+) serves as cofactor.

The enzyme catalyses 2-C-methyl-D-erythritol 4-phosphate + NADP(+) = 1-deoxy-D-xylulose 5-phosphate + NADPH + H(+). Its pathway is isoprenoid biosynthesis; isopentenyl diphosphate biosynthesis via DXP pathway; isopentenyl diphosphate from 1-deoxy-D-xylulose 5-phosphate: step 1/6. Its function is as follows. Catalyzes the NADPH-dependent rearrangement and reduction of 1-deoxy-D-xylulose-5-phosphate (DXP) to 2-C-methyl-D-erythritol 4-phosphate (MEP). This chain is 1-deoxy-D-xylulose 5-phosphate reductoisomerase, found in Pseudomonas paraeruginosa (strain DSM 24068 / PA7) (Pseudomonas aeruginosa (strain PA7)).